A 245-amino-acid polypeptide reads, in one-letter code: 2,3-bisphosphoglycerate-dependent phosphoglycerate mutase (245 aa).

Residues 8–15, 21–22, arginine 60, 87–90, lysine 98, 114–115, and 183–184 contribute to the substrate site; these read RHGQSLWN, TG, ERHY, RR, and GN. The active-site Tele-phosphohistidine intermediate is the histidine 9. The active-site Proton donor/acceptor is glutamate 87.

This sequence belongs to the phosphoglycerate mutase family. BPG-dependent PGAM subfamily.

The enzyme catalyses (2R)-2-phosphoglycerate = (2R)-3-phosphoglycerate. Its pathway is carbohydrate degradation; glycolysis; pyruvate from D-glyceraldehyde 3-phosphate: step 3/5. Functionally, catalyzes the interconversion of 2-phosphoglycerate and 3-phosphoglycerate. The sequence is that of 2,3-bisphosphoglycerate-dependent phosphoglycerate mutase from Bacillus thuringiensis (strain Al Hakam).